The following is a 159-amino-acid chain: Protein A40 (159 aa).

Topologically, residues 1-9 (MNKHKTDYA) are cytoplasmic. A helical; Signal-anchor for type II membrane protein transmembrane segment spans residues 10 to 30 (GYACCVICGLIVGIIFTATLL). Residues 31-159 (KVVERKLVHT…TPKLHSCYTI (129 aa)) lie on the Extracellular side of the membrane. Residues 63-159 (YNNKCIHLST…TPKLHSCYTI (97 aa)) form the C-type lectin domain.

This sequence belongs to the poxviridae A40 protein family.

Its subcellular location is the host membrane. This Bos taurus (Bovine) protein is Protein A40.